Consider the following 191-residue polypeptide: Prostaglandin-H2 D-isomerase (191 aa).

The signal sequence occupies residues 1 to 24 (MAALHTLWMGLVLLGVLGVLQTQA). Glutamine 25 is subject to Pyrrolidone carboxylic acid. Asparagine 51 carries N-linked (GlcNAc...) asparagine glycosylation. Residue cysteine 65 is the Nucleophile of the active site. A glycan (N-linked (GlcNAc...) asparagine) is linked at asparagine 78. Cysteine 89 and cysteine 186 form a disulfide bridge.

It belongs to the calycin superfamily. Lipocalin family. Monomer.

It localises to the rough endoplasmic reticulum. The protein localises to the nucleus membrane. The protein resides in the golgi apparatus. Its subcellular location is the cytoplasm. It is found in the perinuclear region. It localises to the secreted. It catalyses the reaction prostaglandin H2 = prostaglandin D2. Its function is as follows. Catalyzes the conversion of PGH2 to PGD2, a prostaglandin involved in smooth muscle contraction/relaxation and a potent inhibitor of platelet aggregation. Involved in a variety of CNS functions, such as sedation, NREM sleep and PGE2-induced allodynia, and may have an anti-apoptotic role in oligodendrocytes. Binds small non-substrate lipophilic molecules, including biliverdin, bilirubin, retinal, retinoic acid and thyroid hormone, and may act as a scavenger for harmful hydrophobic molecules and as a secretory retinoid and thyroid hormone transporter. Possibly involved in development and maintenance of the blood-brain, blood-retina, blood-aqueous humor and blood-testis barrier. It is likely to play important roles in both maturation and maintenance of the central nervous system and male reproductive system. Involved in PLA2G3-dependent maturation of mast cells. PLA2G3 is secreted by immature mast cells and acts on nearby fibroblasts upstream to PTDGS to synthesize PGD2, which in turn promotes mast cell maturation and degranulation via PTGDR. This is Prostaglandin-H2 D-isomerase (PTGDS) from Ursus arctos (Brown bear).